The chain runs to 283 residues: Glutamyl-Q tRNA(Asp) synthetase (283 aa).

Residues 5 to 9 (RFAPT) and E41 each bind L-glutamate. A 'HIGH' region motif is present at residues 8-18 (PTPSGPLHLGS). The Zn(2+) site is built by C97, C99, Y111, and C115. L-glutamate-binding residues include Y168 and R186. Residues 224–228 (KLSKQ) carry the 'KMSKS' region motif. K227 contributes to the ATP binding site.

It belongs to the class-I aminoacyl-tRNA synthetase family. GluQ subfamily. Zn(2+) is required as a cofactor.

Catalyzes the tRNA-independent activation of glutamate in presence of ATP and the subsequent transfer of glutamate onto a tRNA(Asp). Glutamate is transferred on the 2-amino-5-(4,5-dihydroxy-2-cyclopenten-1-yl) moiety of the queuosine in the wobble position of the QUC anticodon. The sequence is that of Glutamyl-Q tRNA(Asp) synthetase from Idiomarina loihiensis (strain ATCC BAA-735 / DSM 15497 / L2-TR).